Here is a 326-residue protein sequence, read N- to C-terminus: N-acetyl-gamma-glutamyl-phosphate reductase (326 aa).

Cysteine 155 is an active-site residue.

Belongs to the NAGSA dehydrogenase family. Type 1 subfamily.

Its subcellular location is the cytoplasm. The catalysed reaction is N-acetyl-L-glutamate 5-semialdehyde + phosphate + NADP(+) = N-acetyl-L-glutamyl 5-phosphate + NADPH + H(+). It participates in amino-acid biosynthesis; L-arginine biosynthesis; N(2)-acetyl-L-ornithine from L-glutamate: step 3/4. Catalyzes the NADPH-dependent reduction of N-acetyl-5-glutamyl phosphate to yield N-acetyl-L-glutamate 5-semialdehyde. The sequence is that of N-acetyl-gamma-glutamyl-phosphate reductase from Shewanella woodyi (strain ATCC 51908 / MS32).